The chain runs to 349 residues: tRNA pseudouridine synthase D (349 aa).

Phe27 serves as a coordination point for substrate. The Nucleophile role is filled by Asp80. A substrate-binding site is contributed by Asn129. Positions 155-303 (GVPNYFGAQR…VEAARRAMLL (149 aa)) constitute a TRUD domain. Phe329 contributes to the substrate binding site.

This sequence belongs to the pseudouridine synthase TruD family.

The enzyme catalyses uridine(13) in tRNA = pseudouridine(13) in tRNA. Responsible for synthesis of pseudouridine from uracil-13 in transfer RNAs. In Escherichia fergusonii (strain ATCC 35469 / DSM 13698 / CCUG 18766 / IAM 14443 / JCM 21226 / LMG 7866 / NBRC 102419 / NCTC 12128 / CDC 0568-73), this protein is tRNA pseudouridine synthase D.